Consider the following 331-residue polypeptide: Adenosine deaminase (331 aa).

Positions 12 and 14 each coordinate Zn(2+). Substrate-binding residues include histidine 14, aspartate 16, and glycine 170. Histidine 197 contacts Zn(2+). Glutamate 200 acts as the Proton donor in catalysis. Position 278 (aspartate 278) interacts with Zn(2+). Aspartate 279 is a binding site for substrate.

It belongs to the metallo-dependent hydrolases superfamily. Adenosine and AMP deaminases family. Adenosine deaminase subfamily. The cofactor is Zn(2+).

It carries out the reaction adenosine + H2O + H(+) = inosine + NH4(+). It catalyses the reaction 2'-deoxyadenosine + H2O + H(+) = 2'-deoxyinosine + NH4(+). Its function is as follows. Catalyzes the hydrolytic deamination of adenosine and 2-deoxyadenosine. The chain is Adenosine deaminase from Shewanella putrefaciens (strain CN-32 / ATCC BAA-453).